The following is a 138-amino-acid chain: Putative pre-16S rRNA nuclease (138 aa).

The protein belongs to the YqgF nuclease family.

It localises to the cytoplasm. Functionally, could be a nuclease involved in processing of the 5'-end of pre-16S rRNA. In Bacteroides thetaiotaomicron (strain ATCC 29148 / DSM 2079 / JCM 5827 / CCUG 10774 / NCTC 10582 / VPI-5482 / E50), this protein is Putative pre-16S rRNA nuclease.